Consider the following 273-residue polypeptide: Ribosomal RNA small subunit methyltransferase A (273 aa).

Positions 18, 20, 45, 66, 91, and 113 each coordinate S-adenosyl-L-methionine.

Belongs to the class I-like SAM-binding methyltransferase superfamily. rRNA adenine N(6)-methyltransferase family. RsmA subfamily.

The protein resides in the cytoplasm. It catalyses the reaction adenosine(1518)/adenosine(1519) in 16S rRNA + 4 S-adenosyl-L-methionine = N(6)-dimethyladenosine(1518)/N(6)-dimethyladenosine(1519) in 16S rRNA + 4 S-adenosyl-L-homocysteine + 4 H(+). Functionally, specifically dimethylates two adjacent adenosines (A1518 and A1519) in the loop of a conserved hairpin near the 3'-end of 16S rRNA in the 30S particle. May play a critical role in biogenesis of 30S subunits. The sequence is that of Ribosomal RNA small subunit methyltransferase A from Escherichia coli O1:K1 / APEC.